The sequence spans 103 residues: Muscarinic toxin BM14 (103 aa).

A signal peptide spans 1 to 21 (MKTLLLTLVVVTIICLDLGYT). Cystine bridges form between Cys24–Cys45, Cys27–Cys37, Cys38–Cys72, Cys76–Cys90, and Cys91–Cys96.

This sequence belongs to the three-finger toxin family. Ancestral subfamily. Orphan group XVII sub-subfamily. In terms of tissue distribution, expressed by the venom gland.

The protein resides in the secreted. This toxin inhibits the binding of [3H]quinuclidinyl benzilate to the M2 muscarinic acetylcholine (mAchR) receptor subtype (CHRM2). In Bungarus multicinctus (Many-banded krait), this protein is Muscarinic toxin BM14.